Consider the following 292-residue polypeptide: 11-beta-hydroxysteroid dehydrogenase 1 (292 aa).

Residues 1-7 (MAFMKKY) lie on the Cytoplasmic side of the membrane. Residues 8-24 (LLPILGLFMAYYYYSAN) form a helical; Signal-anchor for type II membrane protein membrane-spanning segment. Residues 25-292 (EEFRPEMLQG…SYNMDRFINK (268 aa)) are Lumenal-facing. Residues 41-67 (GASKGIGREMAYHLAKMGAHVVVTARS), 92-93 (TM), and 119-121 (NHI) each bind NADP(+). Residues asparagine 123 and asparagine 162 are each glycosylated (N-linked (GlcNAc...) asparagine). Residue serine 170 coordinates substrate. Tyrosine 183 serves as the catalytic Proton acceptor. Residue 183–187 (YSASK) coordinates NADP(+). An N-linked (GlcNAc...) asparagine glycan is attached at asparagine 207. NADP(+) is bound at residue 218 to 222 (IDTET).

It belongs to the short-chain dehydrogenases/reductases (SDR) family. In terms of assembly, homodimer. In terms of processing, glycosylated. In terms of tissue distribution, widely expressed, highest expression in liver, lower in testis, ovary, lung, foreskin fibroblasts, and much lower in kidney. Expressed in liver (at protein level). Expressed in the basal cells of the corneal epithelium and in the ciliary nonpigmented epithelium (both at mRNA and at protein level).

The protein resides in the endoplasmic reticulum membrane. The enzyme catalyses an 11beta-hydroxysteroid + NADP(+) = an 11-oxosteroid + NADPH + H(+). The catalysed reaction is cortisone + NADPH + H(+) = cortisol + NADP(+). It carries out the reaction corticosterone + NADP(+) = 11-dehydrocorticosterone + NADPH + H(+). It catalyses the reaction a 7beta-hydroxysteroid + NADP(+) = a 7-oxosteroid + NADPH + H(+). The enzyme catalyses 7-oxocholesterol + NADPH + H(+) = 7beta-hydroxycholesterol + NADP(+). The catalysed reaction is chenodeoxycholate + NADP(+) = 7-oxolithocholate + NADPH + H(+). It carries out the reaction 7-oxolithocholate + NADPH + H(+) = ursodeoxycholate + NADP(+). It catalyses the reaction glycochenodeoxycholate + NADP(+) = 7-oxoglycolithocholate + NADPH + H(+). The enzyme catalyses taurochenodeoxycholate + NADP(+) = 7-oxotaurolithocholate + NADPH + H(+). The catalysed reaction is tauroursodeoxycholate + NADP(+) = 7-oxotaurolithocholate + NADPH + H(+). It carries out the reaction glycoursodeoxycholate + NADP(+) = 7-oxoglycolithocholate + NADPH + H(+). It catalyses the reaction 7-oxopregnenolone + NADPH + H(+) = 7beta-hydroxypregnenolone + NADP(+). The enzyme catalyses 3beta,7alpha-dihydroxyandrost-5-en-17-one + NADP(+) = 3beta-hydroxy-5-androstene-7,17-dione + NADPH + H(+). The catalysed reaction is 3beta-hydroxy-5-androstene-7,17-dione + NADPH + H(+) = 3beta,7beta-dihydroxyandrost-5-en-17-one + NADP(+). It carries out the reaction 3beta-hydroxy-5alpha-androstane-7,17-dione + NADPH + H(+) = 3beta,7beta-dihydroxy-5alpha-androstan-17-one + NADP(+). Its pathway is steroid metabolism. Its activity is regulated as follows. Hexose-6-phosphate dehydrogenase (H6PD) provides cosubstrate NADPH, and the glucose-6-phosphate transporter in the ER-membrane supplies the substrate for H6PDH, their activities stimulate the reduction of cortisone and abolish the oxidation of cortisol. Its function is as follows. Controls the reversible conversion of biologically active glucocorticoids such as cortisone to cortisol, and 11-dehydrocorticosterone to corticosterone in the presence of NADP(H). Participates in the corticosteroid receptor-mediated anti-inflammatory response, as well as metabolic and homeostatic processes. Plays a role in the secretion of aqueous humor in the eye, maintaining a normotensive, intraocular environment. Bidirectional in vitro, predominantly functions as a reductase in vivo, thereby increasing the concentration of active glucocorticoids. It has broad substrate specificity, besides glucocorticoids, it accepts other steroid and sterol substrates. Interconverts 7-oxo- and 7-hydroxy-neurosteroids such as 7-oxopregnenolone and 7beta-hydroxypregnenolone, 7-oxodehydroepiandrosterone (3beta-hydroxy-5-androstene-7,17-dione) and 7beta-hydroxydehydroepiandrosterone (3beta,7beta-dihydroxyandrost-5-en-17-one), among others. Catalyzes the stereo-specific conversion of the major dietary oxysterol, 7-ketocholesterol (7-oxocholesterol), into the more polar 7-beta-hydroxycholesterol metabolite. 7-oxocholesterol is one of the most important oxysterols, it participates in several events such as induction of apoptosis, accumulation in atherosclerotic lesions, lipid peroxidation, and induction of foam cell formation. Mediates the 7-oxo reduction of 7-oxolithocholate mainly to chenodeoxycholate, and to a lesser extent to ursodeoxycholate, both in its free form and when conjugated to glycine or taurine, providing a link between glucocorticoid activation and bile acid metabolism. Catalyzes the synthesis of 7-beta-25-dihydroxycholesterol from 7-oxo-25-hydroxycholesterol in vitro, which acts as a ligand for the G-protein-coupled receptor (GPCR) Epstein-Barr virus-induced gene 2 (EBI2) and may thereby regulate immune cell migration. The sequence is that of 11-beta-hydroxysteroid dehydrogenase 1 from Homo sapiens (Human).